Here is a 161-residue protein sequence, read N- to C-terminus: M-phase phosphoprotein 6 (161 aa).

Glycyl lysine isopeptide (Lys-Gly) (interchain with G-Cter in SUMO2) cross-links involve residues K37 and K86. At S111 the chain carries Phosphoserine. The Nuclear localization signal motif lies at 117 to 134 (RRYETLVGTIGKKFVKKR). Residues K128, K151, and K154 each participate in a glycyl lysine isopeptide (Lys-Gly) (interchain with G-Cter in SUMO2) cross-link.

This sequence belongs to the MPP6 family. Associates with the RNA exosome complex, mediated by EXOSC3. Interacts with ARHGAP18. Interacts with exosome cofactors EXOSC10 and MTREX. Post-translationally, phosphorylated in M (mitotic) phase.

Its subcellular location is the nucleus. The protein localises to the nucleolus. It is found in the cytoplasm. Its function is as follows. RNA-binding protein that associates with the RNA exosome complex. Involved in the 3'-processing of the 7S pre-RNA to the mature 5.8S rRNA and plays a role in recruiting the RNA exosome complex to pre-rRNA; this function may include C1D. The polypeptide is M-phase phosphoprotein 6 (Mus musculus (Mouse)).